We begin with the raw amino-acid sequence, 199 residues long: HTH-type transcriptional regulator BetI (199 aa).

The region spanning 8–68 is the HTH tetR-type domain; sequence EIRKPQLVKA…ETMREILRQL (61 aa). Positions 31–50 form a DNA-binding region, H-T-H motif; the sequence is SISLISKEAGVSTGIINHYF.

It functions in the pathway amine and polyamine biosynthesis; betaine biosynthesis via choline pathway [regulation]. Repressor involved in the biosynthesis of the osmoprotectant glycine betaine. It represses transcription of the choline transporter BetT and the genes of BetAB involved in the synthesis of glycine betaine. The sequence is that of HTH-type transcriptional regulator BetI from Vibrio parahaemolyticus serotype O3:K6 (strain RIMD 2210633).